The primary structure comprises 156 residues: Keratin-associated protein 13-4 (156 aa).

4 repeat units span residues 37–46 (CQLGSSLYRN), 47–56 (CQKTCWEPTS), 57–66 (CRKSCYRRRT), and 73–82 (CQTTCSRSLG). A 4 X 10 AA approximate repeats region spans residues 37 to 82 (CQLGSSLYRNCQKTCWEPTSCRKSCYRRRTSMLCSPCQTTCSRSLG).

It belongs to the PMG family. In terms of assembly, interacts with hair keratins.

In terms of biological role, in the hair cortex, hair keratin intermediate filaments are embedded in an interfilamentous matrix, consisting of hair keratin-associated proteins (KRTAP), which are essential for the formation of a rigid and resistant hair shaft through their extensive disulfide bond cross-linking with abundant cysteine residues of hair keratins. The matrix proteins include the high-sulfur and high-glycine-tyrosine keratins. This chain is Keratin-associated protein 13-4 (KRTAP13-4), found in Macaca fascicularis (Crab-eating macaque).